The sequence spans 84 residues: Large ribosomal subunit protein bL27 (84 aa).

Residues 1–25 (MAHKKAGGSSRNGRDSNGQRRGVKR) form a disordered region.

The protein belongs to the bacterial ribosomal protein bL27 family.

In Desulfatibacillum aliphaticivorans, this protein is Large ribosomal subunit protein bL27.